The sequence spans 440 residues: Chromosomal replication initiator protein DnaA (440 aa).

The domain I, interacts with DnaA modulators stretch occupies residues 1–75 (MNPNQILENL…QSGNKASVLI (75 aa)). Positions 75 to 99 (IQAQSAKQSSKSTKIDIAHIKAQST) are domain II. Positions 100 to 316 (ILNPSFTFES…GIIISLNAYA (217 aa)) are domain III, AAA+ region. 4 residues coordinate ATP: Gly146, Gly148, Lys149, and Thr150. The segment at 317-440 (TILGQEITLE…KNKILVKSQS (124 aa)) is domain IV, binds dsDNA.

It belongs to the DnaA family. In terms of assembly, oligomerizes as a right-handed, spiral filament on DNA at oriC.

It localises to the cytoplasm. Its function is as follows. Plays an essential role in the initiation and regulation of chromosomal replication. ATP-DnaA binds to the origin of replication (oriC) to initiate formation of the DNA replication initiation complex once per cell cycle. Binds the DnaA box (a 9 base pair repeat at the origin) and separates the double-stranded (ds)DNA. Forms a right-handed helical filament on oriC DNA; dsDNA binds to the exterior of the filament while single-stranded (ss)DNA is stabiized in the filament's interior. The ATP-DnaA-oriC complex binds and stabilizes one strand of the AT-rich DNA unwinding element (DUE), permitting loading of DNA polymerase. After initiation quickly degrades to an ADP-DnaA complex that is not apt for DNA replication. Binds acidic phospholipids. This chain is Chromosomal replication initiator protein DnaA, found in Campylobacter jejuni subsp. jejuni serotype O:6 (strain 81116 / NCTC 11828).